We begin with the raw amino-acid sequence, 454 residues long: 3-phosphoshikimate 1-carboxyvinyltransferase (454 aa).

Lys39, Ser40, and Arg44 together coordinate 3-phosphoshikimate. Residue Lys39 participates in phosphoenolpyruvate binding. Residues Gly112 and Arg140 each coordinate phosphoenolpyruvate. Ser185, Gln187, Asp333, and Lys360 together coordinate 3-phosphoshikimate. Gln187 contributes to the phosphoenolpyruvate binding site. Asp333 (proton acceptor) is an active-site residue. Phosphoenolpyruvate is bound by residues Arg364 and Arg405.

The protein belongs to the EPSP synthase family. As to quaternary structure, monomer.

The protein resides in the cytoplasm. It catalyses the reaction 3-phosphoshikimate + phosphoenolpyruvate = 5-O-(1-carboxyvinyl)-3-phosphoshikimate + phosphate. It functions in the pathway metabolic intermediate biosynthesis; chorismate biosynthesis; chorismate from D-erythrose 4-phosphate and phosphoenolpyruvate: step 6/7. Catalyzes the transfer of the enolpyruvyl moiety of phosphoenolpyruvate (PEP) to the 5-hydroxyl of shikimate-3-phosphate (S3P) to produce enolpyruvyl shikimate-3-phosphate and inorganic phosphate. The chain is 3-phosphoshikimate 1-carboxyvinyltransferase from Xylella fastidiosa (strain Temecula1 / ATCC 700964).